The primary structure comprises 236 residues: LexA repressor (236 aa).

The segment at residues 26 to 46 (FDEMKDALDLRSKSGIHRLII) is a DNA-binding region (H-T-H motif). Residues Ser157 and Lys195 each act as for autocatalytic cleavage activity in the active site.

The protein belongs to the peptidase S24 family. In terms of assembly, homodimer.

It carries out the reaction Hydrolysis of Ala-|-Gly bond in repressor LexA.. In terms of biological role, represses a number of genes involved in the response to DNA damage (SOS response), including recA and lexA. In the presence of single-stranded DNA, RecA interacts with LexA causing an autocatalytic cleavage which disrupts the DNA-binding part of LexA, leading to derepression of the SOS regulon and eventually DNA repair. This Methylocella silvestris (strain DSM 15510 / CIP 108128 / LMG 27833 / NCIMB 13906 / BL2) protein is LexA repressor.